Reading from the N-terminus, the 85-residue chain is Small ribosomal subunit protein bS18 (85 aa).

This sequence belongs to the bacterial ribosomal protein bS18 family. As to quaternary structure, part of the 30S ribosomal subunit. Forms a tight heterodimer with protein bS6.

Functionally, binds as a heterodimer with protein bS6 to the central domain of the 16S rRNA, where it helps stabilize the platform of the 30S subunit. The sequence is that of Small ribosomal subunit protein bS18 from Helicobacter pylori (strain P12).